Reading from the N-terminus, the 307-residue chain is Replication termination factor 2 (307 aa).

The tract at residues 193–296 (AKLEKKTKKP…SSAKRSKEES (104 aa)) is disordered. The segment covering 227 to 241 (GKPEEADPDPREKKS) has biased composition (basic and acidic residues). S288 is subject to Phosphoserine.

Belongs to the rtf2 family. Interacts with DDI2; probably also interacts with DDI1. Post-translationally, undergoes proteasomal degradation, via DDI1 and DDI2. Removal from stalled replisomes and degradation are required for genome stability.

It localises to the chromosome. Replication termination factor which is a component of the elongating replisome. Required for ATR pathway signaling upon DNA damage and has a positive activity during DNA replication. Might function to facilitate fork pausing at replication fork barriers like the rDNA. May be globally required to stimulate ATR signaling after the fork stalls or encounters a lesion. Interacts with nascent DNA. The sequence is that of Replication termination factor 2 from Mus musculus (Mouse).